The chain runs to 145 residues: Brain and acute leukemia cytoplasmic protein (145 aa).

The N-myristoyl glycine moiety is linked to residue Gly2. Residue Cys3 is the site of S-palmitoyl cysteine attachment. The tract at residues 3–35 is interaction with CAMK2A; the sequence is CGGSRADAIEPRYYESWTRETESTWLTYTDSDA. Residues 27-119 are disordered; the sequence is WLTYTDSDAP…AKRDAKRMPA (93 aa). Residues 32–46 show a composition bias toward low complexity; that stretch reads DSDAPPSAAAPDSGP. The segment covering 83–108 has biased composition (polar residues); that stretch reads CETQCPNPQSLSSGPLTQKQNGLQTT. The segment covering 109-119 has biased composition (basic and acidic residues); that stretch reads EAKRDAKRMPA.

In terms of assembly, interacts with CAMK2A. Post-translationally, palmitoylation and myristoylation target the protein to the lipid rafts. Predominantly expressed in neuroectoderm-derived tissues. Expressed in the brain and spinal cord, and at low levels, in the adrenal gland. In the bone marrow, confined to the CD34+ progenitor cells. Not found in peripheral blood mononuclear cells, nor lymph nodes. Tends to be expressed at high levels in acute myeloid leukemia and glioblastoma cells.

It localises to the cytoplasm. It is found in the synapse. The protein resides in the synaptosome. The protein localises to the membrane raft. Its subcellular location is the postsynaptic density. Its function is as follows. May play a synaptic role at the postsynaptic lipid rafts possibly through interaction with CAMK2A. This is Brain and acute leukemia cytoplasmic protein from Homo sapiens (Human).